The primary structure comprises 537 residues: Chaperonin GroEL 2 (537 aa).

ATP-binding positions include 29-32 (TLGP), 86-90 (DGTTT), glycine 413, 477-479 (NAA), and aspartate 493.

It belongs to the chaperonin (HSP60) family. As to quaternary structure, forms a cylinder of 14 subunits composed of two heptameric rings stacked back-to-back. Interacts with the co-chaperonin GroES.

It is found in the cytoplasm. It catalyses the reaction ATP + H2O + a folded polypeptide = ADP + phosphate + an unfolded polypeptide.. Its function is as follows. Together with its co-chaperonin GroES, plays an essential role in assisting protein folding. The GroEL-GroES system forms a nano-cage that allows encapsulation of the non-native substrate proteins and provides a physical environment optimized to promote and accelerate protein folding. This is Chaperonin GroEL 2 from Thermobifida fusca (strain YX).